Here is a 362-residue protein sequence, read N- to C-terminus: Exopolygalacturonase (362 aa).

PbH1 repeat units follow at residues 138–164, 165–186, 188–208, and 218–239; these read CKNL…HIGR, SDGV…SLGD, SKNI…SVGS, and VVGI…RIKT. N140 carries an N-linked (GlcNAc...) asparagine glycan. The Proton donor role is filled by D179. N192 and N195 each carry an N-linked (GlcNAc...) asparagine glycan. H202 is a catalytic residue. An N-linked (GlcNAc...) asparagine glycan is attached at N225.

The protein belongs to the glycosyl hydrolase 28 family. Pollen tubes growing through the style during pollination.

Its subcellular location is the secreted. It localises to the cell wall. It catalyses the reaction [(1-&gt;4)-alpha-D-galacturonosyl](n) + H2O = alpha-D-galacturonate + [(1-&gt;4)-alpha-D-galacturonosyl](n-1). May function in depolymerizing pectin during pollen development, germination, and tube growth. Acts as an exo-polygalacturonase. This Oenothera organensis (Evening primrose) protein is Exopolygalacturonase.